The primary structure comprises 160 residues: Ribosome maturation factor RimP (160 aa).

It belongs to the RimP family.

It is found in the cytoplasm. Its function is as follows. Required for maturation of 30S ribosomal subunits. The protein is Ribosome maturation factor RimP of Citrifermentans bemidjiense (strain ATCC BAA-1014 / DSM 16622 / JCM 12645 / Bem) (Geobacter bemidjiensis).